We begin with the raw amino-acid sequence, 118 residues long: Large ribosomal subunit protein bL19 (118 aa).

Belongs to the bacterial ribosomal protein bL19 family.

Its function is as follows. This protein is located at the 30S-50S ribosomal subunit interface and may play a role in the structure and function of the aminoacyl-tRNA binding site. This Helicobacter pylori (strain J99 / ATCC 700824) (Campylobacter pylori J99) protein is Large ribosomal subunit protein bL19 (rplS).